Reading from the N-terminus, the 235-residue chain is Lipoprotein-releasing system ATP-binding protein LolD (235 aa).

An ABC transporter domain is found at leucine 7–arginine 234. Position 43–50 (glycine 43–serine 50) interacts with ATP.

Belongs to the ABC transporter superfamily. Lipoprotein translocase (TC 3.A.1.125) family. In terms of assembly, the complex is composed of two ATP-binding proteins (LolD) and two transmembrane proteins (LolC and LolE).

It localises to the cell inner membrane. Part of the ABC transporter complex LolCDE involved in the translocation of mature outer membrane-directed lipoproteins, from the inner membrane to the periplasmic chaperone, LolA. Responsible for the formation of the LolA-lipoprotein complex in an ATP-dependent manner. This chain is Lipoprotein-releasing system ATP-binding protein LolD, found in Pectobacterium atrosepticum (strain SCRI 1043 / ATCC BAA-672) (Erwinia carotovora subsp. atroseptica).